A 197-amino-acid polypeptide reads, in one-letter code: Beta-crystallin A2 (197 aa).

Positions 1–11 (MSSASAPGPAP) are N-terminal arm. Beta/gamma crystallin 'Greek key' domains are found at residues 12–52 (ACLT…KVEN) and 53–99 (GAWV…RPVL). The interval 100–105 (CANHSD) is connecting peptide. Beta/gamma crystallin 'Greek key' domains follow at residues 106–147 (SRVT…KVSS) and 148–196 (GAWV…RRVQ).

The protein belongs to the beta/gamma-crystallin family. In terms of assembly, homo/heterodimer, or complexes of higher-order. The structure of beta-crystallin oligomers seems to be stabilized through interactions between the N-terminal arms.

Its function is as follows. Crystallins are the dominant structural components of the vertebrate eye lens. This Oryctolagus cuniculus (Rabbit) protein is Beta-crystallin A2 (CRYBA2).